The primary structure comprises 139 residues: Ribulose bisphosphate carboxylase small subunit (139 aa).

The protein belongs to the RuBisCO small chain family. Heterohexadecamer of 8 large and 8 small subunits.

The protein localises to the plastid. The protein resides in the chloroplast. In terms of biological role, ruBisCO catalyzes two reactions: the carboxylation of D-ribulose 1,5-bisphosphate, the primary event in carbon dioxide fixation, as well as the oxidative fragmentation of the pentose substrate in the photorespiration process. Both reactions occur simultaneously and in competition at the same active site. Although the small subunit is not catalytic it is essential for maximal activity. This Thalassiosira nordenskioeldii (Marine diatom) protein is Ribulose bisphosphate carboxylase small subunit.